Reading from the N-terminus, the 222-residue chain is ALADPLKVMISGAPASGKGTQCELIKTKYQLAHISAGDLLRAEIAAGSENGKRAKEFMEKGQLVPDEIVVNMVKERLRQPDAQENGWLLDGYPRSYSQAMALETLEIRPDTFILLDVPDELLVERVVGRRLDPVTGKIYHLKYSPPENEEIASRLTQRFDDTEEKVKLRLETYYQNIESLLSTYENIIVKVQGDATVDAVFAKIDELLGSILEKKNEMVSST.

15 to 20 is a binding site for ATP; it reads ASGKGT. The tract at residues 35–64 is NMP; that stretch reads SAGDLLRAEIAAGSENGKRAKEFMEKGQLV. AMP-binding positions include R41, 62–64, 91–94, and Q98; these read QLV and GYPR. The LID stretch occupies residues 128–161; that stretch reads GRRLDPVTGKIYHLKYSPPENEEIASRLTQRFDD. R129 lines the ATP pocket. R158 is an AMP binding site. Residue A195 participates in ATP binding.

Monomer.

The protein resides in the plastid. Its subcellular location is the chloroplast. It catalyses the reaction AMP + ATP = 2 ADP. In terms of biological role, catalyzes the reversible transfer of the terminal phosphate group between ATP and AMP. Plays an important role in cellular energy homeostasis and in adenine nucleotide metabolism. The maize enzyme also works with CMP, albeit with 10% of the activity with AMP. This Zea mays (Maize) protein is Adenylate kinase, chloroplastic (ADK1).